Reading from the N-terminus, the 276-residue chain is Putative pyruvate, phosphate dikinase regulatory protein (276 aa).

151 to 158 (GISRTSKT) serves as a coordination point for ADP.

The protein belongs to the pyruvate, phosphate/water dikinase regulatory protein family. PDRP subfamily.

It carries out the reaction N(tele)-phospho-L-histidyl/L-threonyl-[pyruvate, phosphate dikinase] + ADP = N(tele)-phospho-L-histidyl/O-phospho-L-threonyl-[pyruvate, phosphate dikinase] + AMP + H(+). It catalyses the reaction N(tele)-phospho-L-histidyl/O-phospho-L-threonyl-[pyruvate, phosphate dikinase] + phosphate + H(+) = N(tele)-phospho-L-histidyl/L-threonyl-[pyruvate, phosphate dikinase] + diphosphate. Bifunctional serine/threonine kinase and phosphorylase involved in the regulation of the pyruvate, phosphate dikinase (PPDK) by catalyzing its phosphorylation/dephosphorylation. This is Putative pyruvate, phosphate dikinase regulatory protein from Streptococcus agalactiae serotype Ia (strain ATCC 27591 / A909 / CDC SS700).